The chain runs to 527 residues: Heat shock factor protein HSF8 (527 aa).

The DNA-binding element occupies Pro39 to His133. Disordered stretches follow at residues Arg128 to Ser158, Asn241 to Gln273, and Ser297 to Lys341. Over residues Gly134–Pro152 the composition is skewed to low complexity. The segment covering Ser317 to Arg326 has biased composition (polar residues).

Belongs to the HSF family. As to quaternary structure, homotrimer. Post-translationally, exhibits temperature-dependent phosphorylation.

Its subcellular location is the nucleus. Its function is as follows. DNA-binding protein that specifically binds heat shock promoter elements (HSE) and activates transcription. In Solanum lycopersicum (Tomato), this protein is Heat shock factor protein HSF8 (HSF8).